We begin with the raw amino-acid sequence, 368 residues long: MELQANLENVLQKVNNFINIDAKRQIYAAHFDNLKNTIFNELRKNEVLAYLFNGFQLGGSYGDNVKVTVPNEYDLVFNIKFPEQPLIIVTADHELPGNVFLDFTRVIHKIAKEKQHEKILQHLKQWLDDENYLKVEKFQWFLRSCFIDVLTKMNFKITFKGRTSSLRYSREGPAHTIKVTESLNFDYSVDFVPGILLNANQCVTSNIVGQWEAIPKPTPTNNHLYKSFRASFYRQEQKIIKNQQQLKNVYRMMKKFRDSKTNMLKMKSYFIKTLFLWKSSRENVSYWSKPLTEIIIDMFKDMEKSLREEKLPFYWDRKLNLYDNYQPRLMREMLNCVESARETLEKAAKELTLPLQKRVFCIFCKLKI.

Residues S60 and 72-74 (EYD) contribute to the ATP site. Residues E72, D74, and D190 each contribute to the Mg(2+) site. GTP contacts are provided by residues D190 and 229–236 (RASFYRQE). ATP-binding positions include 233-236 (YRQE), K254, and 268-272 (SYFIK).

It belongs to the mab-21 family. Mg(2+) is required as a cofactor. It depends on Mn(2+) as a cofactor.

It catalyses the reaction GTP + ATP = 3',2'-cGAMP + 2 diphosphate. The enzyme catalyses GTP + ATP = pppA(2'-5')pG + diphosphate. The catalysed reaction is pppA(2'-5')pG = 3',2'-cGAMP + diphosphate. Its activity is regulated as follows. The enzyme activity is specifically activated by double-stranded RNA (dsRNA). Functionally, nucleotidyltransferase that catalyzes the formation of cyclic GMP-AMP (3',2'-cGAMP) from ATP and GTP and plays a key role in innate immunity. Synthesizes 3',2'-cGAMP in a two-step reaction through production of the linear intermediate pppA(2'-5')pG. Acts as a key sensor of double-stranded RNA (dsRNA), the presence of dsRNA in the cytoplasm being a danger signal that triggers the immune responses. Directly binds dsRNA, activating the nucleotidyltransferase activity, leading to synthesis of 3',2'-cGAMP, a second messenger that binds to and activates Sting, thereby triggering the antiviral immune response via activation of the NF-kappa-B transcription factor Rel (Relish). The sequence is that of Cyclic GMP-AMP synthase-like receptor from Lucilia cuprina (Green bottle fly).